Consider the following 155-residue polypeptide: Transcriptional regulator MraZ (155 aa).

SpoVT-AbrB domains are found at residues 15–62 (TYEN…GMDR) and 93–136 (SEEL…NPTA).

This sequence belongs to the MraZ family. In terms of assembly, forms oligomers.

It localises to the cytoplasm. It is found in the nucleoid. The chain is Transcriptional regulator MraZ from Rhodospirillum rubrum (strain ATCC 11170 / ATH 1.1.1 / DSM 467 / LMG 4362 / NCIMB 8255 / S1).